The following is a 740-amino-acid chain: Arf-GAP with coiled-coil, ANK repeat and PH domain-containing protein 1 (740 aa).

The region spanning 1 to 226 (MTVKLDFEEC…RKELGAQLHQ (226 aa)) is the BAR domain. The required for formation of endosomal tubules when overexpressed with PIP5K1C stretch occupies residues 1-382 (MTVKLDFEEC…RGPGQGSGHL (382 aa)). Residues 265–360 (GLVMEGHLFK…WVSAVQSSIA (96 aa)) form the PH domain. In terms of domain architecture, Arf-GAP spans 405–527 (GHVVAQVQSV…KFLTKLPEIR (123 aa)). The tract at residues 405–740 (GHVVAQVQSV…SRRSHDLHTL (336 aa)) is required for interaction with GULP1. The C4-type zinc finger occupies 420-443 (CCDCREPAPEWASINLGVTLCIQC). At tyrosine 485 the chain carries 3'-nitrotyrosine. Residues 525-566 (EIRGRRGGRGRPRGQPPVPPKPSIRPRPGSLRSKPEPPSEDL) form a prevents interaction with ITGB1 when S-554 is not phosphorylated region. Positions 525–581 (EIRGRRGGRGRPRGQPPVPPKPSIRPRPGSLRSKPEPPSEDLGSLHPGALLFRASGH) are disordered. Over residues 538-549 (GQPPVPPKPSIR) the composition is skewed to pro residues. At serine 554 the chain carries Phosphoserine; by PKB. ANK repeat units follow at residues 606–635 (DNAT…NVNQ), 639–668 (AGRG…DLGA), and 672–702 (EGRD…EAEA).

As to quaternary structure, banana-shaped homodimer laterally assembling into tetramers, the tetramers further pack helically onto the membrane. Interacts with GTP-bound ARF6. Interacts with third cytoplasmic loop of SLC2A4/GLUT4. Interacts with CLTC. Interacts with GULP1. Forms a complex with GDP-bound ARF6 and GULP1. Interacts with ITGB1; required for ITGB1 recycling. In terms of processing, phosphorylation at Ser-554 by PKB is required for interaction with ITGB1, export of ITGB1 from recycling endosomes to the cell surface and ITGB1-dependent cell migration. In terms of tissue distribution, highest level in lung and spleen. Low level in heart, kidney, liver and pancreas.

It is found in the recycling endosome membrane. GAP activity stimulated by phosphatidylinositol 4,5-bisphosphate (PIP2) and phosphatidic acid. In terms of biological role, GTPase-activating protein (GAP) for ADP ribosylation factor 6 (ARF6) required for clathrin-dependent export of proteins from recycling endosomes to trans-Golgi network and cell surface. Required for regulated export of ITGB1 from recycling endosomes to the cell surface and ITGB1-dependent cell migration. The sequence is that of Arf-GAP with coiled-coil, ANK repeat and PH domain-containing protein 1 (ACAP1) from Homo sapiens (Human).